The primary structure comprises 137 residues: Large ribosomal subunit protein uL16 (137 aa).

It belongs to the universal ribosomal protein uL16 family. As to quaternary structure, part of the 50S ribosomal subunit.

Binds 23S rRNA and is also seen to make contacts with the A and possibly P site tRNAs. The sequence is that of Large ribosomal subunit protein uL16 from Mesorhizobium japonicum (strain LMG 29417 / CECT 9101 / MAFF 303099) (Mesorhizobium loti (strain MAFF 303099)).